We begin with the raw amino-acid sequence, 611 residues long: Rho-related BTB domain-containing protein 3 (611 aa).

The interval 1 to 175 (MSIHIVALGN…KELGATYLEL (175 aa)) is rho-like. 2 consecutive BTB domains span residues 254–356 (VDVV…QWEE) and 420–487 (ADVV…CPAG). The interval 420–611 (ADVVFEIQGT…HSRKCRCLVM (192 aa)) is interaction with Rab9.

In terms of assembly, interacts with RAB9A and RAB9B (at lower level compared to RAB9A-binding). Interacts with M6PRBP1/TIP47. Ubiquitous. Highly expressed in neural and cardiac tissues, pancreas, placenta and testis.

Its subcellular location is the golgi apparatus. Functionally, rab9-regulated ATPase required for endosome to Golgi transport. Involved in transport vesicle docking at the Golgi complex, possibly by participating in release M6PRBP1/TIP47 from vesicles to permit their efficient docking and fusion at the Golgi. Specifically binds Rab9, but not other Rab proteins. Has low intrinsic ATPase activity due to autoinhibition, which is relieved by Rab9. This is Rho-related BTB domain-containing protein 3 (RHOBTB3) from Homo sapiens (Human).